Consider the following 258-residue polypeptide: Imidazole glycerol phosphate synthase subunit HisF (258 aa).

Residues Asp11 and Asp130 contribute to the active site.

It belongs to the HisA/HisF family. Heterodimer of HisH and HisF.

The protein localises to the cytoplasm. The enzyme catalyses 5-[(5-phospho-1-deoxy-D-ribulos-1-ylimino)methylamino]-1-(5-phospho-beta-D-ribosyl)imidazole-4-carboxamide + L-glutamine = D-erythro-1-(imidazol-4-yl)glycerol 3-phosphate + 5-amino-1-(5-phospho-beta-D-ribosyl)imidazole-4-carboxamide + L-glutamate + H(+). Its pathway is amino-acid biosynthesis; L-histidine biosynthesis; L-histidine from 5-phospho-alpha-D-ribose 1-diphosphate: step 5/9. In terms of biological role, IGPS catalyzes the conversion of PRFAR and glutamine to IGP, AICAR and glutamate. The HisF subunit catalyzes the cyclization activity that produces IGP and AICAR from PRFAR using the ammonia provided by the HisH subunit. The protein is Imidazole glycerol phosphate synthase subunit HisF of Shigella dysenteriae serotype 1 (strain Sd197).